The primary structure comprises 500 residues: Probable zinc metalloprotease MGYG_02393 (500 aa).

A signal peptide spans 1 to 24 (MHLSMGGLLPGLALLASANALALA). Asn-61, Asn-103, and Asn-124 each carry an N-linked (GlcNAc...) asparagine glycan. 3 residues coordinate Zn(2+): His-174, Asp-194, and Glu-230. Asn-245 is a glycosylation site (N-linked (GlcNAc...) asparagine). Residue Asp-257 participates in Zn(2+) binding. Positions 414–500 (MPRNVRVNTS…ERGVAVLPFP (87 aa)) constitute a Fibronectin type-III domain. Asn-421 and Asn-427 each carry an N-linked (GlcNAc...) asparagine glycan.

The protein belongs to the peptidase M28 family. M28B subfamily. Zn(2+) serves as cofactor.

The protein localises to the secreted. This chain is Probable zinc metalloprotease MGYG_02393, found in Arthroderma gypseum (strain ATCC MYA-4604 / CBS 118893) (Microsporum gypseum).